Here is a 504-residue protein sequence, read N- to C-terminus: uncharacterized protein (504 aa).

Residues 6-26 (NLFIIFIFLFLLSQVSAYITF) traverse the membrane as a helical segment.

The protein to M.jannaschii MJ1506 and MJ1561.

Its subcellular location is the membrane. This is an uncharacterized protein from Methanocaldococcus jannaschii (strain ATCC 43067 / DSM 2661 / JAL-1 / JCM 10045 / NBRC 100440) (Methanococcus jannaschii).